Reading from the N-terminus, the 148-residue chain is SsrA-binding protein (148 aa).

Basic and acidic residues predominate over residues 127 to 142 (KRESEKERDWERDKAR). A disordered region spans residues 127-148 (KRESEKERDWERDKARLMRVKT).

Belongs to the SmpB family.

The protein localises to the cytoplasm. In terms of biological role, required for rescue of stalled ribosomes mediated by trans-translation. Binds to transfer-messenger RNA (tmRNA), required for stable association of tmRNA with ribosomes. tmRNA and SmpB together mimic tRNA shape, replacing the anticodon stem-loop with SmpB. tmRNA is encoded by the ssrA gene; the 2 termini fold to resemble tRNA(Ala) and it encodes a 'tag peptide', a short internal open reading frame. During trans-translation Ala-aminoacylated tmRNA acts like a tRNA, entering the A-site of stalled ribosomes, displacing the stalled mRNA. The ribosome then switches to translate the ORF on the tmRNA; the nascent peptide is terminated with the 'tag peptide' encoded by the tmRNA and targeted for degradation. The ribosome is freed to recommence translation, which seems to be the essential function of trans-translation. The protein is SsrA-binding protein of Aromatoleum aromaticum (strain DSM 19018 / LMG 30748 / EbN1) (Azoarcus sp. (strain EbN1)).